The chain runs to 384 residues: Chaperone protein DnaJ (384 aa).

One can recognise a J domain in the interval 5–70 (DFYQVLGVSK…QKRQMYDQYG (66 aa)). A CR-type zinc finger spans residues 138–216 (GKTVELEIPT…CHGHGRKEET (79 aa)). Cys151, Cys154, Cys168, Cys171, Cys190, Cys193, Cys204, and Cys207 together coordinate Zn(2+). 4 CXXCXGXG motif repeats span residues 151-158 (CRDCNGSG), 168-175 (CGHCHGSG), 190-197 (CPQCRGTG), and 204-211 (CRTCHGHG).

This sequence belongs to the DnaJ family. As to quaternary structure, homodimer. The cofactor is Zn(2+).

Its subcellular location is the cytoplasm. In terms of biological role, participates actively in the response to hyperosmotic and heat shock by preventing the aggregation of stress-denatured proteins and by disaggregating proteins, also in an autonomous, DnaK-independent fashion. Unfolded proteins bind initially to DnaJ; upon interaction with the DnaJ-bound protein, DnaK hydrolyzes its bound ATP, resulting in the formation of a stable complex. GrpE releases ADP from DnaK; ATP binding to DnaK triggers the release of the substrate protein, thus completing the reaction cycle. Several rounds of ATP-dependent interactions between DnaJ, DnaK and GrpE are required for fully efficient folding. Also involved, together with DnaK and GrpE, in the DNA replication of plasmids through activation of initiation proteins. The sequence is that of Chaperone protein DnaJ from Idiomarina loihiensis (strain ATCC BAA-735 / DSM 15497 / L2-TR).